The sequence spans 259 residues: Adenosylcobinamide-GDP ribazoletransferase (259 aa).

A run of 7 helical transmembrane segments spans residues 36 to 56, 65 to 85, 108 to 128, 133 to 153, 175 to 195, 201 to 221, and 238 to 258; these read FSPL…ILLL, MPFI…VDGL, IGAS…AALF, LILF…IWAI, GFLI…FILI, IIST…ALII, and GASV…ILPA.

This sequence belongs to the CobS family. The cofactor is Mg(2+).

The protein localises to the cell inner membrane. The enzyme catalyses alpha-ribazole + adenosylcob(III)inamide-GDP = adenosylcob(III)alamin + GMP + H(+). It catalyses the reaction alpha-ribazole 5'-phosphate + adenosylcob(III)inamide-GDP = adenosylcob(III)alamin 5'-phosphate + GMP + H(+). The protein operates within cofactor biosynthesis; adenosylcobalamin biosynthesis; adenosylcobalamin from cob(II)yrinate a,c-diamide: step 7/7. Functionally, joins adenosylcobinamide-GDP and alpha-ribazole to generate adenosylcobalamin (Ado-cobalamin). Also synthesizes adenosylcobalamin 5'-phosphate from adenosylcobinamide-GDP and alpha-ribazole 5'-phosphate. The protein is Adenosylcobinamide-GDP ribazoletransferase of Prochlorococcus marinus (strain SARG / CCMP1375 / SS120).